A 1193-amino-acid chain; its full sequence is Kinesin-related protein 3 (1193 aa).

Residues 3 to 329 (SIRVVCRFRP…LRFGSRAKNI (327 aa)) enclose the Kinesin motor domain. An ATP-binding site is contributed by 85-92 (GQTGSGKT). Disordered stretches follow at residues 377–429 (KSSG…SSNV), 573–600 (SSIA…KHAD), 611–630 (LLQR…TATS), 638–665 (ISES…ATSS), 973–1016 (GGGG…SANL), 1032–1114 (KAEP…PVKI), and 1127–1193 (FKKK…QQKD). Positions 405-429 (SSNLSNSVNSTSNLNTSSNTSSSNV) are enriched in low complexity. Positions 450–962 (ELIKVLQEKC…SQVGVDAQNT (513 aa)) form a coiled coil. Composition is skewed to polar residues over residues 573-585 (SSIA…TPKS) and 614-630 (RTPS…TATS). Low complexity-rich tracts occupy residues 643–665 (NIGS…ATSS) and 985–1006 (HSSS…NNNH). The span at 1007–1016 (TTPTPLSANL) shows a compositional bias: polar residues. Composition is skewed to low complexity over residues 1044 to 1078 (NTSI…IGNS), 1086 to 1109 (NNNS…LNGN), and 1132 to 1149 (PSST…QSPQ). Composition is skewed to polar residues over residues 1150 to 1165 (TPSH…ISPN) and 1174 to 1193 (FSYT…QQKD).

Belongs to the TRAFAC class myosin-kinesin ATPase superfamily. Kinesin family. Kinesin subfamily. In terms of assembly, dimer.

It localises to the cytoplasm. It is found in the cytoskeleton. Functionally, microtubule-associated force-producing protein that plays a role in organelle transport. Its motor activity is directed toward the microtubule's plus end. The maximal velocity in an inverted motility assay (moving microtubules on fixed motors) was 1.96 um/s. The protein is Kinesin-related protein 3 (kif3) of Dictyostelium discoideum (Social amoeba).